Here is a 189-residue protein sequence, read N- to C-terminus: MKTGKELKPGTVIRIDNDPWLVQKAEFTKSGRNSAIMKTKLKNLLTGYKTETVYGADDKLDDVILDRKEATLSFISGDSYTFMDTTDYTMYELNAEDIESVLPFVEEGMTDVCEAVFFEGRLVSVELPTTIVRQVDYTEGSARGDTSGKVMKPAKLKNGTELSVADFIEIGDMIEIDTREGGSYKGRAK.

Belongs to the elongation factor P family.

The protein resides in the cytoplasm. It participates in protein biosynthesis; polypeptide chain elongation. Involved in peptide bond synthesis. Stimulates efficient translation and peptide-bond synthesis on native or reconstituted 70S ribosomes in vitro. Probably functions indirectly by altering the affinity of the ribosome for aminoacyl-tRNA, thus increasing their reactivity as acceptors for peptidyl transferase. The sequence is that of Elongation factor P from Pseudomonas fluorescens (strain Pf0-1).